A 537-amino-acid polypeptide reads, in one-letter code: Woronin body major protein hexA (537 aa).

Basic and acidic residues-rich tracts occupy residues 1 to 17 (MYSV…RDAQ), 59 to 70 (DRTSHVEREDTR), and 116 to 134 (DSRV…RSEN). 4 disordered regions span residues 1 to 20 (MYSV…QRTA), 59 to 79 (DRTS…PDPR), 116 to 200 (DSRV…KPVY), and 269 to 295 (PKPL…SRPS). A compositionally biased stretch (low complexity) spans 135-144 (NAKQNKNKNN). Over residues 272–281 (LETRKGDSFS) the composition is skewed to basic and acidic residues.

Belongs to the eIF-5A family. Hex1 subfamily. Forms oligomers. Self-assembles into hexagonal rods. Binds directly or indirectly to the Woronin body tether lah.

It localises to the cell septum. Its subcellular location is the cytoplasm. Its function is as follows. Major component of Woronin bodies, fungal-specific organelles that occlude septal pores in order to separate intact from damaged compartments. HexA binds directly or indirectly to the Woronin body tether that in turn is anchored at the rim of the septal pore. Woronin bodies are important for stress resistance and virulence. In Aspergillus fumigatus (strain ATCC MYA-4609 / CBS 101355 / FGSC A1100 / Af293) (Neosartorya fumigata), this protein is Woronin body major protein hexA.